The sequence spans 195 residues: uncharacterized protein (195 aa).

This is an uncharacterized protein from Archaeoglobus fulgidus (strain ATCC 49558 / DSM 4304 / JCM 9628 / NBRC 100126 / VC-16).